We begin with the raw amino-acid sequence, 218 residues long: Cytochrome b6 (218 aa).

Residues 35–55 traverse the membrane as a helical segment; sequence IFYCLGGITLVCFLIQFATGF. Cys38 is a binding site for heme c. 2 residues coordinate heme b: His89 and His103. Transmembrane regions (helical) follow at residues 93-113, 119-139, and 189-209; these read ASMM…TGGF, LTWV…VTGY, and LHTF…FLMI. 2 residues coordinate heme b: His190 and His205.

It belongs to the cytochrome b family. PetB subfamily. As to quaternary structure, the 4 large subunits of the cytochrome b6-f complex are cytochrome b6, subunit IV (17 kDa polypeptide, PetD), cytochrome f and the Rieske protein, while the 4 small subunits are PetG, PetL, PetM and PetN. The complex functions as a dimer. Heme b serves as cofactor. It depends on heme c as a cofactor.

It is found in the cellular thylakoid membrane. Its function is as follows. Component of the cytochrome b6-f complex, which mediates electron transfer between photosystem II (PSII) and photosystem I (PSI), cyclic electron flow around PSI, and state transitions. This Synechococcus sp. (strain CC9605) protein is Cytochrome b6.